The sequence spans 1837 residues: Zinc finger SWIM domain-containing protein 8 (1837 aa).

Phosphoserine occurs at positions 36, 48, and 53. A disordered region spans residues 45–65; sequence RKQSAGPNSPTGGGGGGGSGG. Residues 55–65 are compositionally biased toward gly residues; the sequence is TGGGGGGGSGG. The SWIM-type zinc finger occupies 172–208; sequence YNVAVMFDRCRVTSCSCTCGAGAKWCTHVVALCLFRI. Ser-437 bears the Phosphoserine mark. 3 disordered regions span residues 514–727, 803–823, and 1016–1232; these read SRPG…EEDD, NPPD…KVST, and SQTH…VPNQ. Basic and acidic residues-rich tracts occupy residues 523–532 and 566–575; these read GLEESRDRPR and LSAEGGDKAL. The residue at position 567 (Ser-567) is a Phosphoserine. Residues 579-602 are compositionally biased toward gly residues; that stretch reads GPGGGKAKALGGAGSGSKGSAGGG. Residues 1019–1040 show a composition bias toward polar residues; the sequence is HKPQTLSSFYSSSRPTTASQRS. Residues 1119–1130 show a composition bias toward gly residues; the sequence is SRGGYNGRGWGS. Thr-1139 is subject to Phosphothreonine. A compositionally biased stretch (polar residues) spans 1144-1159; it reads IDSSAPETTSDSSPTL. Residues Ser-1153, Ser-1156, and Ser-1160 each carry the phosphoserine modification. A compositionally biased stretch (low complexity) spans 1174–1209; sequence GRGQDSDSISSSSSDSLGSSSSSGSRRASASGGARA. Residues 1210–1226 show a composition bias toward basic and acidic residues; that stretch reads KTVEVGRYKGRRPESHA. Phosphoserine is present on Ser-1267. Disordered stretches follow at residues 1442–1464 and 1635–1656; these read SASG…GGPG and QPSP…SQPV. A compositionally biased stretch (gly residues) spans 1447 to 1464; the sequence is RAGGEAGRGMPEGRGGPG. Ser-1836 bears the Phosphoserine mark.

It belongs to the ZSWIM8 family. As to quaternary structure, component of the SCF-like E3 ubiquitin-protein ligase complex which contains CUL3, RBX1, ELOB, ELOC and ZSWIM8. In terms of assembly, (Microbial infection) Interacts with Zika virus protein NS5; this interaction allows STAT2 binding and subsequent proteasomal degradation.

It localises to the cytoplasm. The protein resides in the cytosol. It functions in the pathway protein modification; protein ubiquitination. Substrate recognition component of a SCF-like E3 ubiquitin-protein ligase complex that promotes target-directed microRNA degradation (TDMD), a process that mediates degradation of microRNAs (miRNAs). The SCF-like E3 ubiquitin-protein ligase complex acts by catalyzing ubiquitination and subsequent degradation of AGO proteins (AGO1, AGO2, AGO3 and/or AGO4), thereby exposing miRNAs for degradation. Specifically recognizes and binds AGO proteins when they are engaged with a TDMD target. May also act as a regulator of axon guidance: specifically recognizes misfolded ROBO3 and promotes its ubiquitination and subsequent degradation. Plays an essential role for proper embryonic development of heart and lung. Controls protein quality of DAB1, a key signal molecule for brain development, thus protecting its signaling strength. Mechanistically, recognizes intrinsically disordered regions of DAB1 and eliminates misfolded DAB1 that cannot be properly phosphorylated. In terms of biological role, (Microbial infection) Participates in Zika virus inhibition of IFN signaling by acting as a scaffold protein to connect ZSWIM8/CUL3 ligase complex and STAT2, leading to STAT2 degradation. This Homo sapiens (Human) protein is Zinc finger SWIM domain-containing protein 8.